A 208-amino-acid chain; its full sequence is Dephospho-CoA kinase (208 aa).

A DPCK domain is found at 5 to 201 (IVALTGGIGS…QRYLALAASA (197 aa)). 13–18 (GSGKST) is an ATP binding site.

Belongs to the CoaE family.

It localises to the cytoplasm. The enzyme catalyses 3'-dephospho-CoA + ATP = ADP + CoA + H(+). It participates in cofactor biosynthesis; coenzyme A biosynthesis; CoA from (R)-pantothenate: step 5/5. Catalyzes the phosphorylation of the 3'-hydroxyl group of dephosphocoenzyme A to form coenzyme A. The chain is Dephospho-CoA kinase from Sodalis glossinidius (strain morsitans).